The sequence spans 273 residues: Nitrogenase iron protein 2 (273 aa).

8–15 (GKGGIGKS) contacts ATP. Cysteine 95 serves as a coordination point for [4Fe-4S] cluster. Residue arginine 98 is modified to ADP-ribosylarginine; by dinitrogenase reductase ADP-ribosyltransferase. Cysteine 130 is a [4Fe-4S] cluster binding site.

Belongs to the NifH/BchL/ChlL family. As to quaternary structure, homodimer. It depends on [4Fe-4S] cluster as a cofactor. In terms of processing, the reversible ADP-ribosylation of Arg-98 inactivates the nitrogenase reductase and regulates nitrogenase activity.

It carries out the reaction N2 + 8 reduced [2Fe-2S]-[ferredoxin] + 16 ATP + 16 H2O = H2 + 8 oxidized [2Fe-2S]-[ferredoxin] + 2 NH4(+) + 16 ADP + 16 phosphate + 6 H(+). Functionally, the key enzymatic reactions in nitrogen fixation are catalyzed by the nitrogenase complex, which has 2 components: the iron protein and the molybdenum-iron protein. This is Nitrogenase iron protein 2 (nifH2) from Methanosarcina barkeri.